The primary structure comprises 159 residues: MSGLTHFDESGRAHMVDVSEKPVTARVAVARGAVKMSAETLALVTEGRAEKGDVLGVARLAGIMGAKRTADLIPLCHPLPITKVALELTADPALPGVVVEATVKTGGQTGVEMEALTAVSVACLTIYDMVKAVEKGMEITGIRLLLKEGGKSGRFEASA.

Substrate is bound by residues 75 to 77 and 113 to 114; these read LCH and ME. The active site involves aspartate 128.

This sequence belongs to the MoaC family. In terms of assembly, homohexamer; trimer of dimers.

It carries out the reaction (8S)-3',8-cyclo-7,8-dihydroguanosine 5'-triphosphate = cyclic pyranopterin phosphate + diphosphate. It participates in cofactor biosynthesis; molybdopterin biosynthesis. Its function is as follows. Catalyzes the conversion of (8S)-3',8-cyclo-7,8-dihydroguanosine 5'-triphosphate to cyclic pyranopterin monophosphate (cPMP). The polypeptide is Cyclic pyranopterin monophosphate synthase (Cereibacter sphaeroides (strain ATCC 17023 / DSM 158 / JCM 6121 / CCUG 31486 / LMG 2827 / NBRC 12203 / NCIMB 8253 / ATH 2.4.1.) (Rhodobacter sphaeroides)).